A 791-amino-acid chain; its full sequence is Protein Rf1, mitochondrial (791 aa).

The transit peptide at 1-27 (MARRAASRAVGALRSDGSIQGRGGRAG) directs the protein to the mitochondrion. The tract at residues 1–31 (MARRAASRAVGALRSDGSIQGRGGRAGGSGA) is disordered. Over residues 20–30 (QGRGGRAGGSG) the composition is skewed to gly residues. PPR repeat units lie at residues 86–120 (DLCTYGILIGCCCRAGRLDLGFAALGNVIKKGFRV), 121–156 (DAIAFTPLLKGLCADKRTSDAMDIVLRRMTELGCIP), 157–194 (NVFSYNILLKGLCDENRSQEALELLHMMADDRGGGSPP), 195–229 (DVVSYTTVINGFFKEGDSDKAYSTYHEMLDRGILP), 230–264 (DVVTYNSIIAALCKAQAMDKAMEVLNTMVKNGVMP), 265–299 (DCMTYNSILHGYCSSGQPKEAIGFLKKMRSDGVEP), 300–334 (DVVTYSLLMDYLCKNGRCMEARKIFDSMTKRGLKP), 335–369 (EITTYGTLLQGYATKGALVEMHGLLDLMVRNGIHP), 370–404 (DHYVFSILICAYAKQGKVDQAMLVFSKMRQQGLNP), 405–439 (NAVTYGAVIGILCKSGRVEDAMLYFEQMIDEGLSP), 440–474 (GNIVYNSLIHGLCTCNKWERAEELILEMLDRGICL), 475–509 (NTIFFNSIIDSHCKEGRVIESEKLFELMVRIGVKP), 510–544 (NVITYNTLINGYCLAGKMDEAMKLLSGMVSVGLKP), 545–579 (NTVTYSTLINGYCKISRMEDALVLFKEMESSGVSP), 580–614 (DIITYNIILQGLFQTRRTAAAKELYVRITESGTQI), 615–649 (ELSTYNIILHGLCKNKLTDDALQMFQNLCLMDLKL), 650–684 (EARTFNIMIDALLKVGRNDEAKDLFVAFSSNGLVP), 685–719 (NYWTYRLMAENIIGQGLLEELDQLFLSMEDNGCTV), and 720–754 (DSGMLNFIVRELLQRGEITRAGTYLSMIDEKHFSL).

The protein resides in the mitochondrion. In terms of biological role, reduces the expression of the cytoplasmic male sterility (CMS)-associated mitochondrial gene ORF79, encoding a cytotoxic peptide. Can restore male fertility by blocking ORF79 production via endonucleolytic cleavage of dicistronic ATP6/ORF79 mRNA. Promotes the editing of ATP6 mRNAs independently of its cleavage function. The protein is Protein Rf1, mitochondrial (Rf1) of Oryza sativa subsp. indica (Rice).